Consider the following 93-residue polypeptide: Defensin alpha 4 (93 aa).

An N-terminal signal peptide occupies residues 1–19; that stretch reads MRTLTLLITLLLLALHTQA. The propeptide occupies 20–62; the sequence is ESPQERAKAAPDQDMVMEDQDIFISFGGYKGTVLQDAVVKAGQ. 3 disulfide bridges follow: C64–C92, C66–C81, and C71–C91.

This sequence belongs to the alpha-defensin family. As to expression, expressed in neutrophils (at protein level). Highest expression in bone marrow and to a much lesser extent in small intestine.

The protein localises to the secreted. Its function is as follows. Host-defense peptide that has antimicrobial activity against Gram-positive and Gram-negative bacteria and fungi (in vitro). Exhibits activity against E.coli, A.calcoaceticus, S,aureus and C.albicans. The chain is Defensin alpha 4 from Rattus norvegicus (Rat).